The primary structure comprises 739 residues: MKKILAFLLTVALVAVVAIPQAVVSFAADFNYGEALQKAIMFYEFQRSGKLPENKRNNWRGDSALNDGADNGLDLTGGWYDAGDHVKFNLPMAYAVTMLAWSVYESRDAYVQSGQLPYILDNIKWATDYFIKCHPSPNVYYYQVGDGALDHSWWGPAEVMQMPRPSFKVDLTNPGSTVVAETAAAMAASSIVFKPTDPEYAATLLRHAKELFTFADTTRSDAGYRAAEGYYSSHSGFYDELTWASIWLYLATGDQSYLDKAESYEPHWERERGTTLISYSWAHCWDNKLYGSLLLLAKITGKSYYKQCIENHLDYWTVGFNGSRVQYTPKGLAYLDRWGSLRYATTQAFLASVYADWSGCDPAKAAVYKEFAKKQVDYALGSTGRSFVVGFGKNPPRNPHHRTAHSSWSALMTEPAECRHILVGALVGGPDGSDSYVDRLDDYQCNEVANDYNAGFVGALAKMYEKYGGEPIPNFVAFETPGEEFYVEAAVNAAGPGFVNIKASIINKSGWPARGSDKLSAKYFVDISEAVAKGITLDQITVQSTTNGGAKVSQLLPWDPDNHIYYVNIDFTGINIFPGGINEYKRDVYFTITAPYGEGNWDNTNDFSFQGLEQGFTSKKTEYIPLYDGNVRVWGKVPDGGSEPDPTPTITVGPTPSVTPTSVPGIMLGDVNFDGRINSTDYSRLKRYVIKSLEFTDPEEHQKFIAAADVDGNGRINSTDLYVLNRYILKLIEKFPAEQ.

Residues 1–27 (MKKILAFLLTVALVAVVAIPQAVVSFA) form the signal peptide. A catalytic region spans residues 28 to 470 (ADFNYGEALQ…AKMYEKYGGE (443 aa)). Asp-84 serves as the catalytic Nucleophile. Residues His-400, Asp-438, and Glu-447 contribute to the active site. The 160-residue stretch at 480–639 (TPGEEFYVEA…NVRVWGKVPD (160 aa)) folds into the CBM3 domain. The Dockerin domain occupies 664–737 (PGIMLGDVNF…ILKLIEKFPA (74 aa)).

It belongs to the glycosyl hydrolase 9 (cellulase E) family. Requires Ca(2+) as cofactor.

It carries out the reaction Endohydrolysis of (1-&gt;4)-beta-D-glucosidic linkages in cellulose, lichenin and cereal beta-D-glucans.. Its function is as follows. This enzyme catalyzes the endohydrolysis of 1,4-beta-glucosidic linkages in cellulose, lichenin and cereal beta-D-glucans. The polypeptide is Endoglucanase F (celF) (Acetivibrio thermocellus (strain ATCC 27405 / DSM 1237 / JCM 9322 / NBRC 103400 / NCIMB 10682 / NRRL B-4536 / VPI 7372) (Clostridium thermocellum)).